We begin with the raw amino-acid sequence, 98 residues long: U-megalopygitoxin(1)-Mo1 (98 aa).

The N-terminal stretch at 1–17 (MYRETFVFCVLLAVVSA) is a signal peptide.

This sequence belongs to the caterpillar 1 family. Post-translationally, contains 4 disulfide bonds. Expressed by the venom apparatus.

Its subcellular location is the secreted. Functionally, probable toxin. In Megalopyge opercularis (Southern flannel moth), this protein is U-megalopygitoxin(1)-Mo1.